Consider the following 620-residue polypeptide: Chaperone protein HscA homolog (620 aa).

It belongs to the heat shock protein 70 family.

In terms of biological role, chaperone involved in the maturation of iron-sulfur cluster-containing proteins. Has a low intrinsic ATPase activity which is markedly stimulated by HscB. In Shewanella baltica (strain OS195), this protein is Chaperone protein HscA homolog.